The following is a 390-amino-acid chain: DNA polymerase IV (390 aa).

In terms of domain architecture, UmuC spans 6 to 187 (VMHVDLDAFF…LDISIMPGIG (182 aa)). Mg(2+) contacts are provided by aspartate 10 and aspartate 105. Residue glutamate 106 is part of the active site.

The protein belongs to the DNA polymerase type-Y family. In terms of assembly, monomer. Requires Mg(2+) as cofactor.

It localises to the cytoplasm. It carries out the reaction DNA(n) + a 2'-deoxyribonucleoside 5'-triphosphate = DNA(n+1) + diphosphate. In terms of biological role, poorly processive, error-prone DNA polymerase involved in untargeted mutagenesis. Copies undamaged DNA at stalled replication forks, which arise in vivo from mismatched or misaligned primer ends. These misaligned primers can be extended by PolIV. Exhibits no 3'-5' exonuclease (proofreading) activity. May be involved in translesional synthesis, in conjunction with the beta clamp from PolIII. The sequence is that of DNA polymerase IV from Dehalococcoides mccartyi (strain ATCC BAA-2266 / KCTC 15142 / 195) (Dehalococcoides ethenogenes (strain 195)).